A 462-amino-acid polypeptide reads, in one-letter code: Glycine--tRNA ligase (462 aa).

Substrate-binding residues include Arg94 and Glu143. ATP is bound by residues 175–177 (RNE), 185–190 (FRTCEF), 259–260 (EL), and 308–311 (GLTR). Residue 190-194 (FEQME) participates in substrate binding. A substrate-binding site is contributed by 304–308 (ETSAG).

Belongs to the class-II aminoacyl-tRNA synthetase family. Homodimer.

The protein resides in the cytoplasm. It catalyses the reaction tRNA(Gly) + glycine + ATP = glycyl-tRNA(Gly) + AMP + diphosphate. Functionally, catalyzes the attachment of glycine to tRNA(Gly). The sequence is that of Glycine--tRNA ligase from Treponema pallidum (strain Nichols).